Here is a 256-residue protein sequence, read N- to C-terminus: tRNA pseudouridine synthase A (256 aa).

The active-site Nucleophile is aspartate 55. Tyrosine 113 lines the substrate pocket.

Belongs to the tRNA pseudouridine synthase TruA family. As to quaternary structure, homodimer.

The catalysed reaction is uridine(38/39/40) in tRNA = pseudouridine(38/39/40) in tRNA. Functionally, formation of pseudouridine at positions 38, 39 and 40 in the anticodon stem and loop of transfer RNAs. This Ligilactobacillus salivarius (strain UCC118) (Lactobacillus salivarius) protein is tRNA pseudouridine synthase A.